Reading from the N-terminus, the 80-residue chain is Cortexin-3 (80 aa).

Residues 28–48 (TTFVFVILLFIFLGILIVRCF) traverse the membrane as a helical segment.

It belongs to the cortexin family.

It localises to the membrane. This chain is Cortexin-3 (Ctxn3), found in Mus musculus (Mouse).